Here is a 118-residue protein sequence, read N- to C-terminus: Putative pterin-4-alpha-carbinolamine dehydratase (118 aa).

This sequence belongs to the pterin-4-alpha-carbinolamine dehydratase family.

It carries out the reaction (4aS,6R)-4a-hydroxy-L-erythro-5,6,7,8-tetrahydrobiopterin = (6R)-L-erythro-6,7-dihydrobiopterin + H2O. The sequence is that of Putative pterin-4-alpha-carbinolamine dehydratase (phhB) from Xanthomonas axonopodis pv. citri (strain 306).